The primary structure comprises 650 residues: Flap endonuclease 1 (650 aa).

Positions 1 to 106 (MGIKGLTKFI…SELEKRGEKR (106 aa)) are N-domain. Position 34 (Asp-34) interacts with Mg(2+). DNA is bound by residues Arg-47 and Arg-72. The Mg(2+) site is built by Asp-88, Glu-160, Glu-162, Asp-181, and Asp-183. Residues 124-266 (EIKKQSGRTV…KTAYNLIKEY (143 aa)) form an I-domain region. Glu-160 contributes to the DNA binding site. DNA-binding residues include Gly-244 and Asp-246. Asp-246 serves as a coordination point for Mg(2+). The segment at 349-357 (TQRRLDNFF) is interaction with PCNA. Residues 371–592 (ETKKEQTLPA…NSYNNIKNNN (222 aa)) form a disordered region. Basic and acidic residues-rich tracts occupy residues 413–469 (MKEE…KKSL), 478–502 (DSDK…EKIN), and 511–524 (DHSR…KDNI). Positions 525–562 (SDINNNNNNNNNNSSSNNNNISNNHFNSVSSNSTFNSS) are enriched in low complexity. Positions 565-581 (LKSEDTLKSNSPLKEDS) are enriched in basic and acidic residues. Low complexity predominate over residues 582 to 592 (PNSYNNIKNNN).

This sequence belongs to the XPG/RAD2 endonuclease family. FEN1 subfamily. Interacts with PCNA1 and PCNA2. Three molecules of FEN1 bind to one PCNA trimer with each molecule binding to one PCNA monomer. PCNA stimulates the nuclease activity without altering cleavage specificity. Mg(2+) serves as cofactor. In terms of processing, phosphorylated. Phosphorylation upon DNA damage induces relocalization to the nuclear plasma.

It is found in the nucleus. The protein resides in the nucleolus. It localises to the nucleoplasm. The protein localises to the mitochondrion. With respect to regulation, inhibited by monovalent metal ions. In terms of biological role, structure-specific nuclease with 5'-flap endonuclease and 5'-3' exonuclease activities involved in DNA replication and repair. During DNA replication, cleaves the 5'-overhanging flap structure that is generated by displacement synthesis when DNA polymerase encounters the 5'-end of a downstream Okazaki fragment. It enters the flap from the 5'-end and then tracks to cleave the flap base, leaving a nick for ligation. Also involved in the long patch base excision repair (LP-BER) pathway, by cleaving within the apurinic/apyrimidinic (AP) site-terminated flap. Acts as a genome stabilization factor that prevents flaps from equilibrating into structures that lead to duplications and deletions. Also possesses 5'-3' exonuclease activity on nicked or gapped double-stranded DNA, and exhibits RNase H activity. Also involved in replication and repair of rDNA and in repairing mitochondrial DNA. The polypeptide is Flap endonuclease 1 (Plasmodium falciparum).